The chain runs to 297 residues: Tyrosine recombinase XerD (297 aa).

The 85-residue stretch at 2–86 (KKLDPIIEQF…CLRKFFRFLC (85 aa)) folds into the Core-binding (CB) domain. Residues 107-291 (QLPKSLSEEQ…AKTRLKSIHK (185 aa)) form the Tyr recombinase domain. Residues R147, K171, H243, R246, and H269 contribute to the active site. The active-site O-(3'-phospho-DNA)-tyrosine intermediate is Y278.

The protein belongs to the 'phage' integrase family. XerD subfamily. In terms of assembly, forms a cyclic heterotetrameric complex composed of two molecules of XerC and two molecules of XerD.

It localises to the cytoplasm. Site-specific tyrosine recombinase, which acts by catalyzing the cutting and rejoining of the recombining DNA molecules. The XerC-XerD complex is essential to convert dimers of the bacterial chromosome into monomers to permit their segregation at cell division. It also contributes to the segregational stability of plasmids. The sequence is that of Tyrosine recombinase XerD from Haemophilus ducreyi (strain 35000HP / ATCC 700724).